Here is a 446-residue protein sequence, read N- to C-terminus: D-inositol 3-phosphate glycosyltransferase (446 aa).

Residues 1 to 21 (MSHYVGRLGRRSPAGSGRLRL) form a disordered region. His-34 provides a ligand contact to 1D-myo-inositol 3-phosphate. UDP-N-acetyl-alpha-D-glucosamine-binding positions include 40–41 (QP) and Gly-48. 1D-myo-inositol 3-phosphate is bound by residues 45-50 (DAGGMN), Lys-103, Tyr-136, Thr-160, and Arg-180. UDP-N-acetyl-alpha-D-glucosamine contacts are provided by Arg-255, Lys-260, and Val-321. Mg(2+)-binding residues include Phe-330, Arg-331, and Ala-333. 2 residues coordinate UDP-N-acetyl-alpha-D-glucosamine: Glu-343 and Glu-351. Residue Thr-357 coordinates Mg(2+).

This sequence belongs to the glycosyltransferase group 1 family. MshA subfamily. In terms of assembly, homodimer.

It catalyses the reaction 1D-myo-inositol 3-phosphate + UDP-N-acetyl-alpha-D-glucosamine = 1D-myo-inositol 2-acetamido-2-deoxy-alpha-D-glucopyranoside 3-phosphate + UDP + H(+). Catalyzes the transfer of a N-acetyl-glucosamine moiety to 1D-myo-inositol 3-phosphate to produce 1D-myo-inositol 2-acetamido-2-deoxy-glucopyranoside 3-phosphate in the mycothiol biosynthesis pathway. The sequence is that of D-inositol 3-phosphate glycosyltransferase from Streptomyces scabiei (strain 87.22).